Consider the following 1349-residue polypeptide: ABC multidrug transporter mdr1 (1349 aa).

Residues 1–62 form a disordered region; the sequence is MPAPETGASS…PDGKQKDHGK (62 aa). Residues 35 to 45 show a composition bias toward basic and acidic residues; the sequence is DNEKPHDHHSL. Helical transmembrane passes span 108-128, 162-182, 234-254, and 257-277; these read ILII…LPLF, YFVY…VGFI, KVGL…VAYV, and WKLA…MGGG. The ABC transmembrane type-1 1 domain occupies 112-402; that stretch reads LVSAICAIAA…VAPNGQAFTN (291 aa). The N-linked (GlcNAc...) asparagine glycan is linked to asparagine 308. The next 2 membrane-spanning stretches (helical) occupy residues 339–359 and 371–391; these read ILGM…GLGF and VNVG…FSLG. In terms of domain architecture, ABC transporter 1 spans 437 to 682; that stretch reads IEFRNVKHIY…KGTYYKLVEA (246 aa). Position 472–479 (472–479) interacts with ATP; it reads GPSGSGKS. 2 consecutive transmembrane segments (helical) span residues 779 to 799 and 828 to 848; these read MLIG…QAFL and FFVV…AFAI. Residues 780-1069 form the ABC transmembrane type-1 2 domain; that stretch reads LIGLTFSFLA…VFSFAPDMGK (290 aa). Asparagine 878 and asparagine 893 each carry an N-linked (GlcNAc...) asparagine glycan. 4 helical membrane passes run 896–916, 926–948, 1016–1036, and 1043–1063; these read GVSG…GAAM, LALV…FYML, ALVF…LGHH, and FFVC…VFSF. Residues 1104 to 1342 form the ABC transporter 2 domain; the sequence is IEFRDVHFRY…KGRYYELVNL (239 aa). Asparagine 1126 carries an N-linked (GlcNAc...) asparagine glycan. ATP is bound at residue 1139–1146; that stretch reads GPSGCGKS.

It belongs to the ABC transporter superfamily. ABCB family. Multidrug resistance exporter (TC 3.A.1.201) subfamily.

Its subcellular location is the cell membrane. The enzyme catalyses voriconazole(in) + ATP + H2O = voriconazole(out) + ADP + phosphate + H(+). In terms of biological role, pleiotropic ABC efflux transporter that may be involved in A.fumigatus adaptation to azoles such as vorizonazole. The sequence is that of ABC multidrug transporter mdr1 from Aspergillus fumigatus (strain ATCC MYA-4609 / CBS 101355 / FGSC A1100 / Af293) (Neosartorya fumigata).